We begin with the raw amino-acid sequence, 327 residues long: Pantothenate kinase (327 aa).

ATP is bound at residue 105–112 (GSVAVGKS).

It belongs to the prokaryotic pantothenate kinase family.

It localises to the cytoplasm. It carries out the reaction (R)-pantothenate + ATP = (R)-4'-phosphopantothenate + ADP + H(+). The protein operates within cofactor biosynthesis; coenzyme A biosynthesis; CoA from (R)-pantothenate: step 1/5. The protein is Pantothenate kinase of Cutibacterium acnes (strain DSM 16379 / KPA171202) (Propionibacterium acnes).